We begin with the raw amino-acid sequence, 229 residues long: Calcyclin-binding protein (229 aa).

Alanine 2 is subject to N-acetylalanine. Positions 2–81 are interaction with SIAH1; that stretch reads ASALEELQKD…YTVKISNYGW (80 aa). Phosphoserine is present on serine 3. An N6-acetyllysine mark is found at lysine 10 and lysine 21. Serine 36 is subject to Phosphoserine. Residues 38-59 are disordered; it reads IETELRNKMQQKSQKKPEFDNE. A CS domain is found at 74–168; the sequence is VKISNYGWDQ…AENTRWDYLT (95 aa). The segment at 74-229 is interaction with SKP1; sequence VKISNYGWDQ…EKQAREDTEF (156 aa). An N6-acetyllysine mark is found at lysine 86 and lysine 119. The tract at residues 155–229 is interaction with S100A6; that stretch reads CRKKAENTRW…EKQAREDTEF (75 aa). An SGS domain is found at 169–229; it reads QVEKECKEKE…EKQAREDTEF (61 aa).

Component of some large E3 complex at least composed of UBE2D1, SIAH1, CACYBP/SIP, SKP1, APC and TBL1X. Interacts directly with SIAH1, SIAH2 and SKP1. Interacts with protein of the S100 family S100A1, S100A6, S100B, S100P and S100A12 in a calcium-dependent manner. In terms of processing, phosphorylated on serine residues. Phosphorylated upon induction by RA or at high calcium concentrations.

It localises to the nucleus. The protein resides in the cytoplasm. Its function is as follows. May be involved in calcium-dependent ubiquitination and subsequent proteasomal degradation of target proteins. Probably serves as a molecular bridge in ubiquitin E3 complexes. Participates in the ubiquitin-mediated degradation of beta-catenin (CTNNB1). This chain is Calcyclin-binding protein (Cacybp), found in Rattus norvegicus (Rat).